Consider the following 347-residue polypeptide: 5-deoxyribose 1-phosphate isomerase (347 aa).

Substrate contacts are provided by residues 48 to 50 (RGA), R91, and Q198. The active-site Proton donor is the D239. 249-250 (NK) contacts substrate.

This sequence belongs to the EIF-2B alpha/beta/delta subunits family. DrdI subfamily.

The enzyme catalyses 5-deoxy-alpha-D-ribose 1-phosphate = 5-deoxy-D-ribulose 1-phosphate. The protein operates within carbohydrate degradation. Functionally, catalyzes the isomerization of 5-deoxy-alpha-D-ribose 1-phosphate to 5-deoxy-D-ribulose 1-phosphate, as part of a 5-deoxyribose salvage pathway that recycles this toxic radical SAM enzyme by-product to mainstream metabolites. The polypeptide is 5-deoxyribose 1-phosphate isomerase (Bacillus thuringiensis (strain Al Hakam)).